Consider the following 357-residue polypeptide: Aurora kinase A- and ninein-interacting protein (357 aa).

Polar residues predominate over residues 71 to 91 (LQPGKTNGSDQKSVSSHTESQ). The tract at residues 71 to 98 (LQPGKTNGSDQKSVSSHTESQINKESKK) is disordered. Residues 187-357 (RKEEKGDSAR…EGNQVIRHQF (171 aa)) are interaction with AURKA. 2 positions are modified to phosphoserine: serine 267 and serine 292. Positions 281–357 (KDSWSQLFTE…EGNQVIRHQF (77 aa)) are interaction with RBBP8/CtIP.

The protein belongs to the AUNIP family. As to quaternary structure, interacts (via C-terminus) with AURKA (via C-terminus). Interacts (via N-terminus) with NIN; this interaction blocks NIN phosphorylation by both AURKA and GSK3B. Identified in a complex with NIN and AURKA. Interacts with RBBP8/CtIP. Expressed in heart, skeletal muscles, placenta and testis.

It localises to the nucleus. Its subcellular location is the chromosome. The protein localises to the cytoplasm. It is found in the cytoskeleton. The protein resides in the microtubule organizing center. It localises to the centrosome. Its subcellular location is the spindle pole. Its function is as follows. DNA-binding protein that accumulates at DNA double-strand breaks (DSBs) following DNA damage and promotes DNA resection and homologous recombination. Serves as a sensor of DNA damage: binds DNA with a strong preference for DNA substrates that mimic structures generated at stalled replication forks, and anchors RBBP8/CtIP to DSB sites to promote DNA end resection and ensuing homologous recombination repair. Inhibits non-homologous end joining (NHEJ). Required for the dynamic movement of AURKA at the centrosomes and spindle apparatus during the cell cycle. In Homo sapiens (Human), this protein is Aurora kinase A- and ninein-interacting protein.